We begin with the raw amino-acid sequence, 247 residues long: MVDREQLVQKARLAEQAERYDDMAAAMKNVTELNEPLSNEERNLLSVAYKNVVGARRSSWRVISSIEQKTSADGNEKKIEMVRAYREKIEKELEAVCQDVLSLLDNYLIKNCSETQIESKVFYLKMKGDYYRYLAEVATGEKRATVVESSEKAYSEAHEISKEHMQPTHPIRLGLALNYSVFYYEIQNAPEQACHLAKTAFDDAIAELDTLNEDSYKDSTLIMQLLRDNLTLWTSDQQDDDGGEGNN.

Met-1 is modified (N-acetylmethionine). Val-2 bears the N-acetylvaline; in 14-3-3 protein gamma, N-terminally processed mark. The interval Val-2–Asn-247 is interaction with SPATA18/MIEAP. Position 71 is a phosphoserine (Ser-71). Phosphotyrosine is present on Tyr-133. Thr-145 bears the Phosphothreonine mark. Phosphoserine is present on Ser-215. A Phosphothreonine modification is found at Thr-234. At Ser-235 the chain carries Phosphoserine.

It belongs to the 14-3-3 family. In terms of assembly, homodimer. Part of a complex that contains DSG3, PKP1, YAP1 and YWHAG; the complex is required for localization of DSG3 and YAP1 to the cell membrane in keratinocytes. Interacts with SAMSN1. Interacts with RAF1, SSH1 and CRTC2/TORC2. Interacts with ABL1 (phosphorylated form); the interaction retains it in the cytoplasm. Interacts with GAB2. Interacts with MDM4 (phosphorylated); negatively regulates MDM4 activity toward TP53. Interacts with PKA-phosphorylated AANAT and SIRT2. Interacts with the 'Thr-369' phosphorylated form of DAPK2. Interacts with PI4KB, TBC1D22A and TBC1D22B. Interacts with SLITRK1. Interacts with LRRK2; this interaction is dependent on LRRK2 phosphorylation. Interacts with MARK2 and MARK3. Interacts with MEFV. Interacts with ENDOG, TSC2 and PIK3C3; interaction with ENDOG weakens its interaction with TSC2 and PIK3C3. Interacts with (phosphorylated) WDR24. Interacts with BEST1; this interaction promotes L-glutamate channel activity leading to the positive regulation of NMDA glutamate receptor activity through the L-glutamate secretion. Interacts with PKP1 (when phosphorylated); the interaction results in translocation of PKP1 to the cytoplasm and loss of intercellular adhesion in keratinocytes. Interacts with SPATA18/MIEAP; a protein that also plays a role in MALM. Post-translationally, phosphorylated by various PKC isozymes.

It is found in the cytoplasm. Its subcellular location is the cytosol. It localises to the mitochondrion matrix. In terms of biological role, adapter protein implicated in the regulation of a large spectrum of both general and specialized signaling pathways. Binds to a large number of partners, usually by recognition of a phosphoserine or phosphothreonine motif. Binding generally results in the modulation of the activity of the binding partner. Promotes inactivation of WDR24 component of the GATOR2 complex by binding to phosphorylated WDR24. Participates in the positive regulation of NMDA glutamate receptor activity by promoting the L-glutamate secretion through interaction with BEST1. Reduces keratinocyte intercellular adhesion, via interacting with PKP1 and sequestering it in the cytoplasm, thereby reducing its incorporation into desmosomes. Plays a role in mitochondrial protein catabolic process (also named MALM) that promotes the degradation of damaged proteins inside mitochondria. In Bos taurus (Bovine), this protein is 14-3-3 protein gamma.